The primary structure comprises 345 residues: tRNA-specific 2-thiouridylase MnmA 1 (345 aa).

ATP contacts are provided by residues 9 to 16 (GMSGGIDS) and Leu35. Cys96 (nucleophile) is an active-site residue. An intrachain disulfide couples Cys96 to Cys191. Gly120 serves as a coordination point for ATP. The tract at residues 138–140 (KDQ) is interaction with tRNA. Cys191 serves as the catalytic Cysteine persulfide intermediate. Positions 293 to 294 (RY) are interaction with tRNA.

It belongs to the MnmA/TRMU family.

Its subcellular location is the cytoplasm. It carries out the reaction S-sulfanyl-L-cysteinyl-[protein] + uridine(34) in tRNA + AH2 + ATP = 2-thiouridine(34) in tRNA + L-cysteinyl-[protein] + A + AMP + diphosphate + H(+). Its function is as follows. Catalyzes the 2-thiolation of uridine at the wobble position (U34) of tRNA, leading to the formation of s(2)U34. The polypeptide is tRNA-specific 2-thiouridylase MnmA 1 (Aliarcobacter butzleri (strain RM4018) (Arcobacter butzleri)).